The primary structure comprises 714 residues: NCK-interacting protein with SH3 domain (714 aa).

Residues 1-58 form the SH3 domain; that stretch reads MYRALYAFRSAEPNAMAFAAGETFLVLERSSTHWWLAARARSGETGYVPPAYLHRLQG. 2 disordered regions span residues 103–126 and 139–298; these read TLSRRGTSASSATVMTPSTSDHHL and RTGF…AAET. The segment covering 106 to 121 has biased composition (polar residues); the sequence is RRGTSASSATVMTPST. Position 120 is a phosphoserine (serine 120). The short motif at 168 to 185 is the Nuclear localization signal element; sequence RRAAPTTPPPPVKRRDRE. A Phosphothreonine modification is found at threonine 174. Low complexity predominate over residues 200–215; it reads SGGSSVSSGSSASSTS. Positions 216 to 226 are enriched in polar residues; sequence MDTLYTGSSPS. The segment covering 252 to 263 has biased composition (pro residues); the sequence is QPSPSKAPSPEP. A phosphoserine mark is found at serine 260, serine 286, and serine 673.

As to quaternary structure, associates with the intermediate filaments, vimentin and desmin. Binds the first and third SH3 domains of NCK. Binds the proline-rich domains of N-WASP through its SH3 domain. Similarly, binds diaphanous protein homolog 1 (DRF1). Binds the SH3 domains of GRB2 through its proline-rich domains. Interacts with FASLG.

Its subcellular location is the nucleus. Functionally, has an important role in stress fiber formation induced by active diaphanous protein homolog 1 (DRF1). Induces microspike formation, in vivo. In vitro, stimulates N-WASP-induced ARP2/3 complex activation in the absence of CDC42. May play an important role in the maintenance of sarcomere and/or in the assembly of myofibrils into sarcomeres. Implicated in regulation of actin polymerization and cell adhesion. This Mus musculus (Mouse) protein is NCK-interacting protein with SH3 domain (Nckipsd).